Consider the following 183-residue polypeptide: MNLLEDTLKSCPIVKRGEYNYFIHPITDGVPLMNSQLLREVATKIIKISDMDIDKIVTAEAMGIPIATTISLYTDIPYVIMRKRKYLLEGEIPVHQETGYSKGELYLNGVNKGDKVLIVDDVISTGGTMVAIIKALEKAGAHIKDIVCVIERGNGKEEVKEKTGYDVKTLVKIDVVNGKVVIL.

This sequence belongs to the purine/pyrimidine phosphoribosyltransferase family. Archaeal HPRT subfamily. Homodimer.

The protein resides in the cytoplasm. The enzyme catalyses IMP + diphosphate = hypoxanthine + 5-phospho-alpha-D-ribose 1-diphosphate. The catalysed reaction is GMP + diphosphate = guanine + 5-phospho-alpha-D-ribose 1-diphosphate. The protein operates within purine metabolism; IMP biosynthesis via salvage pathway; IMP from hypoxanthine: step 1/1. Its function is as follows. Catalyzes a salvage reaction resulting in the formation of IMP that is energically less costly than de novo synthesis. The sequence is that of Hypoxanthine/guanine phosphoribosyltransferase from Methanothermococcus okinawensis (strain DSM 14208 / JCM 11175 / IH1).